Reading from the N-terminus, the 706-residue chain is Glutamine-dependent NAD(+) synthetase (706 aa).

Residues 5–275 form the CN hydrolase domain; sequence VTVATCALNQ…VEVLTATLDL (271 aa). The active-site Proton acceptor; for glutaminase activity is glutamate 45. Lysine 114 acts as the For glutaminase activity in catalysis. Cysteine 175 acts as the Nucleophile; for glutaminase activity in catalysis. Positions 325-706 are ligase; it reads YHSPAEEISL…RQRQELDGVD (382 aa). Residue 355–362 participates in ATP binding; sequence PLSGGVDS. Residue serine 357 is part of the active site.

It in the C-terminal section; belongs to the NAD synthetase family. Homohexamer.

It catalyses the reaction deamido-NAD(+) + L-glutamine + ATP + H2O = L-glutamate + AMP + diphosphate + NAD(+) + H(+). The protein operates within cofactor biosynthesis; NAD(+) biosynthesis; NAD(+) from deamido-NAD(+) (L-Gln route): step 1/1. Its function is as follows. Catalyzes the ATP-dependent amidation of deamido-NAD to form NAD. Uses L-glutamine as a nitrogen source. The sequence is that of Glutamine-dependent NAD(+) synthetase (NADSYN1) from Bos taurus (Bovine).